The chain runs to 379 residues: Succinyl-diaminopimelate desuccinylase (379 aa).

A Zn(2+)-binding site is contributed by His70. Asp72 is an active-site residue. Asp103 is a Zn(2+) binding site. The active-site Proton acceptor is Glu137. Zn(2+) contacts are provided by Glu138, Glu166, and His352.

This sequence belongs to the peptidase M20A family. DapE subfamily. Homodimer. Requires Zn(2+) as cofactor. The cofactor is Co(2+).

It carries out the reaction N-succinyl-(2S,6S)-2,6-diaminopimelate + H2O = (2S,6S)-2,6-diaminopimelate + succinate. Its pathway is amino-acid biosynthesis; L-lysine biosynthesis via DAP pathway; LL-2,6-diaminopimelate from (S)-tetrahydrodipicolinate (succinylase route): step 3/3. Functionally, catalyzes the hydrolysis of N-succinyl-L,L-diaminopimelic acid (SDAP), forming succinate and LL-2,6-diaminopimelate (DAP), an intermediate involved in the bacterial biosynthesis of lysine and meso-diaminopimelic acid, an essential component of bacterial cell walls. The chain is Succinyl-diaminopimelate desuccinylase from Burkholderia mallei (strain NCTC 10247).